Here is a 345-residue protein sequence, read N- to C-terminus: 4-hydroxyproline 2-epimerase (345 aa).

A substrate-binding site is contributed by Gln85. Ser93 serves as the catalytic Proton acceptor. Residues 94–95 (GS) and Asp251 each bind substrate. The active-site Proton donor is Cys255. Residue 256-257 (GT) coordinates substrate.

It belongs to the proline racemase family.

It catalyses the reaction trans-4-hydroxy-L-proline = cis-4-hydroxy-D-proline. Its function is as follows. Catalyzes the epimerization of trans-4-hydroxy-L-proline (t4LHyp) to cis-4-hydroxy-D-proline (c4DHyp). May be involved in a degradation pathway of t4LHyp, which would allow A.tumefaciens to grow on t4LHyp as a sole carbon source. Can also catalyze the epimerization of trans-3-hydroxy-L-proline (t3LHyp) to cis-3-hydroxy-D-proline (c3DHyp) in vitro. Displays no proline racemase activity. The polypeptide is 4-hydroxyproline 2-epimerase (Agrobacterium fabrum (strain C58 / ATCC 33970) (Agrobacterium tumefaciens (strain C58))).